Reading from the N-terminus, the 46-residue chain is Large ribosomal subunit protein bL34 (46 aa).

This sequence belongs to the bacterial ribosomal protein bL34 family.

This Synechococcus sp. (strain JA-2-3B'a(2-13)) (Cyanobacteria bacterium Yellowstone B-Prime) protein is Large ribosomal subunit protein bL34.